The sequence spans 213 residues: Orotate phosphoribosyltransferase (213 aa).

Lysine 26 serves as a coordination point for 5-phospho-alpha-D-ribose 1-diphosphate. 34–35 provides a ligand contact to orotate; the sequence is FF. Residues 72-73, arginine 99, lysine 100, lysine 103, histidine 105, and 124-132 each bind 5-phospho-alpha-D-ribose 1-diphosphate; these read YK and DDVITAGTA. Residues threonine 128 and arginine 156 each contribute to the orotate site.

This sequence belongs to the purine/pyrimidine phosphoribosyltransferase family. PyrE subfamily. Homodimer. Mg(2+) serves as cofactor.

It catalyses the reaction orotidine 5'-phosphate + diphosphate = orotate + 5-phospho-alpha-D-ribose 1-diphosphate. It participates in pyrimidine metabolism; UMP biosynthesis via de novo pathway; UMP from orotate: step 1/2. Its function is as follows. Catalyzes the transfer of a ribosyl phosphate group from 5-phosphoribose 1-diphosphate to orotate, leading to the formation of orotidine monophosphate (OMP). This Photobacterium profundum (strain SS9) protein is Orotate phosphoribosyltransferase.